The sequence spans 430 residues: Meiotically up-regulated gene 132 protein (430 aa).

Belongs to the UPF0300 family.

The protein resides in the mitochondrion. In terms of biological role, has a role in meiosis. The polypeptide is Meiotically up-regulated gene 132 protein (mug132) (Schizosaccharomyces pombe (strain 972 / ATCC 24843) (Fission yeast)).